Reading from the N-terminus, the 129-residue chain is Large ribosomal subunit protein bL19c (129 aa).

It belongs to the bacterial ribosomal protein bL19 family.

The protein resides in the plastid. The protein is Large ribosomal subunit protein bL19c of Prototheca wickerhamii.